A 136-amino-acid chain; its full sequence is Large-conductance mechanosensitive channel (136 aa).

2 helical membrane-spanning segments follow: residues 9–29 and 79–99; these read AFASRGNVIDMAVGIIIGAAF and IQTIIDFTIIAFAIFMGLKAI.

This sequence belongs to the MscL family. As to quaternary structure, homopentamer.

Its subcellular location is the cell inner membrane. In terms of biological role, channel that opens in response to stretch forces in the membrane lipid bilayer. May participate in the regulation of osmotic pressure changes within the cell. This Shewanella sp. (strain ANA-3) protein is Large-conductance mechanosensitive channel.